Consider the following 508-residue polypeptide: Photosystem II CP47 reaction center protein (508 aa).

The next 6 helical transmembrane spans lie at 21–36 (SVHI…WAGS), 101–115 (IVFS…IWHW), 140–156 (GIHL…FGAF), 203–218 (IAAG…FHLS), 237–252 (VLSS…AFVV), and 457–472 (SFAL…HGAR).

It belongs to the PsbB/PsbC family. PsbB subfamily. PSII is composed of 1 copy each of membrane proteins PsbA, PsbB, PsbC, PsbD, PsbE, PsbF, PsbH, PsbI, PsbJ, PsbK, PsbL, PsbM, PsbT, PsbX, PsbY, PsbZ, Psb30/Ycf12, at least 3 peripheral proteins of the oxygen-evolving complex and a large number of cofactors. It forms dimeric complexes. The cofactor is Binds multiple chlorophylls. PSII binds additional chlorophylls, carotenoids and specific lipids..

The protein resides in the plastid. The protein localises to the chloroplast thylakoid membrane. In terms of biological role, one of the components of the core complex of photosystem II (PSII). It binds chlorophyll and helps catalyze the primary light-induced photochemical processes of PSII. PSII is a light-driven water:plastoquinone oxidoreductase, using light energy to abstract electrons from H(2)O, generating O(2) and a proton gradient subsequently used for ATP formation. This is Photosystem II CP47 reaction center protein from Nasturtium officinale (Watercress).